Reading from the N-terminus, the 345-residue chain is Dihydroorotate dehydrogenase (quinone) (345 aa).

Residues Ala65–Lys69 and Thr89 contribute to the FMN site. Lys69 contributes to the substrate binding site. A substrate-binding site is contributed by Asn114–Phe118. Residues Asn142 and Asn175 each coordinate FMN. A substrate-binding site is contributed by Asn175. The active-site Nucleophile is Ser178. Asn180 provides a ligand contact to substrate. The FMN site is built by Lys220 and Thr248. A substrate-binding site is contributed by Asn249–Thr250. Residues Gly271, Gly300, and Tyr321–Thr322 each bind FMN.

It belongs to the dihydroorotate dehydrogenase family. Type 2 subfamily. Monomer. The cofactor is FMN.

Its subcellular location is the cell membrane. It catalyses the reaction (S)-dihydroorotate + a quinone = orotate + a quinol. The protein operates within pyrimidine metabolism; UMP biosynthesis via de novo pathway; orotate from (S)-dihydroorotate (quinone route): step 1/1. Functionally, catalyzes the conversion of dihydroorotate to orotate with quinone as electron acceptor. This chain is Dihydroorotate dehydrogenase (quinone), found in Burkholderia lata (strain ATCC 17760 / DSM 23089 / LMG 22485 / NCIMB 9086 / R18194 / 383).